Reading from the N-terminus, the 287-residue chain is ATP synthase gamma chain (287 aa).

The protein belongs to the ATPase gamma chain family. In terms of assembly, F-type ATPases have 2 components, CF(1) - the catalytic core - and CF(0) - the membrane proton channel. CF(1) has five subunits: alpha(3), beta(3), gamma(1), delta(1), epsilon(1). CF(0) has three main subunits: a, b and c.

The protein resides in the cell inner membrane. In terms of biological role, produces ATP from ADP in the presence of a proton gradient across the membrane. The gamma chain is believed to be important in regulating ATPase activity and the flow of protons through the CF(0) complex. The polypeptide is ATP synthase gamma chain (Xanthomonas axonopodis pv. citri (strain 306)).